We begin with the raw amino-acid sequence, 152 residues long: uncharacterized protein (152 aa).

Residues 7–27 (TLSVIVFLISLIIIFGIYFSS) traverse the membrane as a helical segment.

It localises to the membrane. This is an uncharacterized protein from Methanocaldococcus jannaschii (strain ATCC 43067 / DSM 2661 / JAL-1 / JCM 10045 / NBRC 100440) (Methanococcus jannaschii).